A 98-amino-acid chain; its full sequence is NADH-ubiquinone oxidoreductase chain 4L (98 aa).

A run of 3 helical transmembrane segments spans residues 1-21 (MTLTYMNIMLAFAISLLGMLT), 27-47 (VASLLCLEGMMMSLFIMATLI), and 61-81 (IILLVFAACETAVGLALLISI).

This sequence belongs to the complex I subunit 4L family. In terms of assembly, core subunit of respiratory chain NADH dehydrogenase (Complex I) which is composed of 45 different subunits.

The protein resides in the mitochondrion inner membrane. It catalyses the reaction a ubiquinone + NADH + 5 H(+)(in) = a ubiquinol + NAD(+) + 4 H(+)(out). Functionally, core subunit of the mitochondrial membrane respiratory chain NADH dehydrogenase (Complex I) which catalyzes electron transfer from NADH through the respiratory chain, using ubiquinone as an electron acceptor. Part of the enzyme membrane arm which is embedded in the lipid bilayer and involved in proton translocation. This is NADH-ubiquinone oxidoreductase chain 4L (MT-ND4L) from Macaca mulatta (Rhesus macaque).